Here is a 546-residue protein sequence, read N- to C-terminus: Protein phosphatase 1G (546 aa).

The N-myristoyl glycine moiety is linked to residue G2. R22 is modified (omega-N-methylarginine). Residues 26 to 505 enclose the PPM-type phosphatase domain; sequence PYGFSAMQGW…DNMTCIIICF (480 aa). Mn(2+) is bound by residues D60 and G61. Disordered stretches follow at residues 116 to 139 and 161 to 328; these read QIAGRPTEDEDEKEKVADEDDVDN and GQNC…SDSG. Position 122 is a phosphothreonine (T122). A compositionally biased stretch (acidic residues) spans 123–139; sequence EDEDEKEKVADEDDVDN. Residue S183 is modified to Phosphoserine. Residues 259–312 are compositionally biased toward acidic residues; the sequence is DSEDESDEAEEEEEDSEECSEEEDGYSSEEAENEEDEDDTEEAEEDDEEEEEEM. Position 383 is an N6-acetyllysine (K383). Mn(2+) contacts are provided by D441 and D496. The tract at residues 512–546 is disordered; it reads ELQPESGKRKLEEVLSTEGAEENGNSDKKKKAKRD. A Phosphoserine modification is found at S527.

It belongs to the PP2C family. In terms of assembly, interacts with NOL3; may dephosphorylate NOL3. Mg(2+) is required as a cofactor. Requires Mn(2+) as cofactor. In terms of tissue distribution, widely expressed. Most abundant in testis, skeletal muscle, and heart.

The protein localises to the cytoplasm. Its subcellular location is the membrane. It catalyses the reaction O-phospho-L-seryl-[protein] + H2O = L-seryl-[protein] + phosphate. It carries out the reaction O-phospho-L-threonyl-[protein] + H2O = L-threonyl-[protein] + phosphate. The sequence is that of Protein phosphatase 1G (PPM1G) from Homo sapiens (Human).